Here is a 661-residue protein sequence, read N- to C-terminus: Bifunctional xylanase/xylan deacetylase (661 aa).

A signal peptide spans 1 to 27; it reads MKLPTLGKCVVRTLMGAVALGAISVNA. One can recognise a GH11 domain in the interval 29 to 226; sequence TLSSNSTGTN…SRGSSDITVS (198 aa). The active-site Nucleophile; for endoxylanase activity is glutamate 116. Glutamate 213 functions as the Proton donor; for endoxylanase activity in the catalytic mechanism. Residues 220–259 are disordered; it reads SSDITVSEGTSGGGTSSVGGASSSVNSSTGGGSSGGITVR. Positions 237–247 are enriched in low complexity; sequence VGGASSSVNSS. Positions 394 to 577 are polysaccharide deacetylase; it reads SNCSGYVGIT…AKGLCPGRID (184 aa). The NodB homology domain maps to 398-574; sequence GYVGITFDDG…NLRAKGLCPG (177 aa). The disordered stretch occupies residues 578–610; sequence PNTGRAVAPSSSGGSSSVALSSSSRSSSSAGGN. A compositionally biased stretch (low complexity) spans 581-608; the sequence is GRAVAPSSSGGSSSVALSSSSRSSSSAG. The CBM10 domain maps to 616–645; sequence QCNWWGTFYPLCQTQTSGWGWENSRSCIST.

The protein in the N-terminal section; belongs to the glycosyl hydrolase 11 (cellulase G) family.

The protein resides in the secreted. The enzyme catalyses Endohydrolysis of (1-&gt;4)-beta-D-xylosidic linkages in xylans.. It carries out the reaction Deacetylation of xylans and xylo-oligosaccharides.. Its pathway is glycan degradation; xylan degradation. Its function is as follows. Endo-acting xylanase which specifically cleaves internal linkages on the xylan backbone, releasing xylooligosaccharides. Is able to hydrolyze oat spelt xylan and the arabinoxylans from wheat and rye, releasing xylobiose as the major product. Also likely catalyzes, via its C-terminal domain, the removal of acetyl groups from acetylated xylan. Thus, has the capability of hydrolyzing acetylated xylan. Does not attack mannan, galactan, arabinan or any cellulosic substrates. This Cellvibrio japonicus (Pseudomonas fluorescens subsp. cellulosa) protein is Bifunctional xylanase/xylan deacetylase (xyn11A).